A 343-amino-acid chain; its full sequence is MKFIDEVKIQISAGDGGNGVASFRREKFIPRGGPDGGDGGHGGSIYALADHNLNTLIDYRFTPVFRAKRGENGRGSDCYGKGAEDIVLRMPVGTIITNDLTGELVADLEHDQQKVLLAKGGRGGLGNLHFKSSTNRAPRQFTHGEAGEQFELRLELRVLADVGLLGLPNAGKSTLIRAVSAARPKVADYPFTTLYPNLGVVRVDAGHSFVMADIPGLIEGAAEGAGLGHRFLKHLGRTRLLLHVIDVAPFDENVDIVHSARALVDELRKFDETLYRKPRWLVFNKVDMLPEDEQQAVCTRLLQAMNWQERWFAISALTGRGCQALIYAIMGHLQQLQSDSEET.

In terms of domain architecture, Obg spans 1–159; that stretch reads MKFIDEVKIQ…FELRLELRVL (159 aa). One can recognise an OBG-type G domain in the interval 160–334; it reads ADVGLLGLPN…LIYAIMGHLQ (175 aa). GTP contacts are provided by residues 166–173, 191–195, 213–216, 284–287, and 315–317; these read GLPNAGKS, FTTLY, DIPG, NKVD, and SAL. Mg(2+)-binding residues include S173 and T193.

The protein belongs to the TRAFAC class OBG-HflX-like GTPase superfamily. OBG GTPase family. Monomer. The cofactor is Mg(2+).

The protein localises to the cytoplasm. An essential GTPase which binds GTP, GDP and possibly (p)ppGpp with moderate affinity, with high nucleotide exchange rates and a fairly low GTP hydrolysis rate. Plays a role in control of the cell cycle, stress response, ribosome biogenesis and in those bacteria that undergo differentiation, in morphogenesis control. The polypeptide is GTPase Obg (Nitrosomonas europaea (strain ATCC 19718 / CIP 103999 / KCTC 2705 / NBRC 14298)).